The chain runs to 384 residues: O-phospho-L-seryl-tRNA:Cys-tRNA synthase 1 (384 aa).

Pyridoxal 5'-phosphate-binding positions include 88–89 (AR), asparagine 195, and 218–220 (SGH). An N6-(pyridoxal phosphate)lysine modification is found at lysine 221.

This sequence belongs to the SepCysS family. In terms of assembly, homodimer. Interacts with SepRS. Pyridoxal 5'-phosphate serves as cofactor.

The enzyme catalyses O-phospho-L-seryl-tRNA(Cys) + hydrogen sulfide + H(+) = L-cysteinyl-tRNA(Cys) + phosphate. In terms of biological role, converts O-phospho-L-seryl-tRNA(Cys) (Sep-tRNA(Cys)) to L-cysteinyl-tRNA(Cys) (Cys-tRNA(Cys)). The chain is O-phospho-L-seryl-tRNA:Cys-tRNA synthase 1 from Methanocella arvoryzae (strain DSM 22066 / NBRC 105507 / MRE50).